A 103-amino-acid polypeptide reads, in one-letter code: Small ribosomal subunit protein uS10 (103 aa).

The protein belongs to the universal ribosomal protein uS10 family. In terms of assembly, part of the 30S ribosomal subunit.

In terms of biological role, involved in the binding of tRNA to the ribosomes. This Rubrobacter xylanophilus (strain DSM 9941 / JCM 11954 / NBRC 16129 / PRD-1) protein is Small ribosomal subunit protein uS10.